A 765-amino-acid chain; its full sequence is 1,4-alpha-glucan branching enzyme GlgB (765 aa).

Catalysis depends on Asp431, which acts as the Nucleophile. Glu484 functions as the Proton donor in the catalytic mechanism.

The protein belongs to the glycosyl hydrolase 13 family. GlgB subfamily. In terms of assembly, monomer.

It carries out the reaction Transfers a segment of a (1-&gt;4)-alpha-D-glucan chain to a primary hydroxy group in a similar glucan chain.. The protein operates within glycan biosynthesis; glycogen biosynthesis. Catalyzes the formation of the alpha-1,6-glucosidic linkages in glycogen by scission of a 1,4-alpha-linked oligosaccharide from growing alpha-1,4-glucan chains and the subsequent attachment of the oligosaccharide to the alpha-1,6 position. This Synechococcus sp. (strain CC9311) protein is 1,4-alpha-glucan branching enzyme GlgB.